A 176-amino-acid chain; its full sequence is ATP-dependent protease subunit HslV (176 aa).

The active site involves Thr-2. 3 residues coordinate Na(+): Gly-157, Cys-160, and Thr-163.

It belongs to the peptidase T1B family. HslV subfamily. In terms of assembly, a double ring-shaped homohexamer of HslV is capped on each side by a ring-shaped HslU homohexamer. The assembly of the HslU/HslV complex is dependent on binding of ATP.

Its subcellular location is the cytoplasm. It catalyses the reaction ATP-dependent cleavage of peptide bonds with broad specificity.. Its activity is regulated as follows. Allosterically activated by HslU binding. Protease subunit of a proteasome-like degradation complex believed to be a general protein degrading machinery. This chain is ATP-dependent protease subunit HslV, found in Erwinia tasmaniensis (strain DSM 17950 / CFBP 7177 / CIP 109463 / NCPPB 4357 / Et1/99).